The following is a 1615-amino-acid chain: Regulating synaptic membrane exocytosis protein 1 (1615 aa).

The tract at residues 1–26 (MSSAVGPRGPRPPTVPPPMQELPDLS) is disordered. The segment covering 9–20 (GPRPPTVPPPMQ) has biased composition (pro residues). Residues 22–205 (LPDLSHLTEE…TKSGAWFFGS (184 aa)) enclose the RabBD domain. The FYVE-type zinc finger occupies 133 to 193 (KDDAPTCGIC…VCNLCRKQQE (61 aa)). The Zn(2+) site is built by cysteine 139, cysteine 142, cysteine 155, cysteine 158, cysteine 163, cysteine 166, cysteine 185, and cysteine 188. The segment at 205-569 (SGPQQPSQDG…CEDVELESES (365 aa)) is disordered. Over residues 206-222 (GPQQPSQDGTLSDTATG) the composition is skewed to polar residues. Over residues 227 to 240 (VPREKKARLQERSR) the composition is skewed to basic and acidic residues. Residues 241-256 (SQTPLSTAAVSSQDTA) show a composition bias toward polar residues. Positions 327-379 (ADERERKERRETRRLEKGRSQDYSDRPEKRDNGRVAEDQKQRKEEEYQTRYRS) are enriched in basic and acidic residues. The span at 399-410 (MHARVSRARHER) shows a compositional bias: basic residues. Positions 421 to 459 (EAAAAAPAEATAGKRAPATARVSPPESPRARAAAAQPPT) are enriched in low complexity. Pro residues predominate over residues 460–475 (EHGPPPPRPAPGPAEP). The segment covering 476-489 (PEPRVPEPLRKQGR) has biased composition (basic and acidic residues). Residues 511–523 (RNDSLSSDQSESV) show a composition bias toward polar residues. At serine 514 the chain carries Phosphoserine. A compositionally biased stretch (basic residues) spans 529 to 541 (KPHRPKRGGKRRQ). The segment covering 559–569 (SCEDVELESES) has biased composition (acidic residues). At serine 592 the chain carries Phosphoserine. The PDZ domain occupies 619–705 (RTTMPKESGA…EPQVEIIVSR (87 aa)). The interval 712–746 (RIPESSHPPLESSSSSFESQKMERPSISVISPTSP) is disordered. Positions 714 to 730 (PESSHPPLESSSSSFES) are enriched in low complexity. Phosphoserine occurs at positions 742 and 745. In terms of domain architecture, C2 1 spans 756-879 (LPGQLSVKLW…ALLDDEPHWY (124 aa)). The tract at residues 884 to 1201 (HDESSLPLPQ…RQLPQVPVRS (318 aa)) is disordered. Serine 895 is modified (phosphoserine). Residues 949–958 (ATTLTVPEQQ) are compositionally biased toward polar residues. A Phosphoserine modification is found at serine 991. Residues 1006–1023 (RHHDASRSPADHRSRHVE) show a composition bias toward basic and acidic residues. Serine 1045 bears the Phosphoserine mark. Basic and acidic residues predominate over residues 1078–1092 (SPERERHSRKSERCS). A compositionally biased stretch (polar residues) spans 1173–1187 (QGSPTQSPPADTSFG). Residue serine 1175 is modified to Phosphoserine. A Phosphothreonine modification is found at threonine 1177. 7 positions are modified to phosphoserine: serine 1179, serine 1231, serine 1233, serine 1234, serine 1262, serine 1263, and serine 1265. The segment at 1256 to 1313 (DNASAKSSDSDVSDVSAISRASSTSRLSSTSFMSEQSERPRGRISSFTPKMQGRRMGT) is disordered. Low complexity predominate over residues 1268-1289 (SDVSAISRASSTSRLSSTSFMS). Serine 1339 bears the Phosphoserine mark. Positions 1368–1397 (RSRSTSQLSQTESGHKKLKSTIQRSTETGM) are disordered. Positions 1461–1579 (AMGDIQIGME…DLSSMVIGWY (119 aa)) constitute a C2 2 domain. Phosphoserine occurs at positions 1600, 1603, 1606, and 1615.

As to quaternary structure, interacts with RAB3C, RAB10, RAB26 and RAB37. Binds SNAP25, SYT1 and CACNA1B. Interaction with SYT1 is enhanced by calcium ions. Interaction with SNAP25 is weaker in the presence of calcium ions. Binds RAB3A, RAB3B and RAB3D that have been activated by GTP-binding. Binds UNC13A. Interacts with TSPOAP1 and RIMBP2. Interacts with PPFIA3 and PPFIA4. Interacts with ERC1. In terms of processing, phosphorylated by BRSK1. As to expression, highly expressed in hippocampus, brain cortex, cerebellum and olfactory bulb. Detected at lower levels in midbrain, hindbrain and spinal cord. Detected retina and in spinal cord motor neurons.

The protein localises to the cell membrane. Its subcellular location is the synapse. It localises to the presynaptic cell membrane. In terms of biological role, rab effector involved in exocytosis. May act as scaffold protein that regulates neurotransmitter release at the active zone. Essential for maintaining normal probability of neurotransmitter release and for regulating release during short-term synaptic plasticity. Plays a role in dendrite formation by melanocytes. This is Regulating synaptic membrane exocytosis protein 1 (Rims1) from Rattus norvegicus (Rat).